The chain runs to 291 residues: Ribosomal RNA small subunit methyltransferase A (291 aa).

6 residues coordinate S-adenosyl-L-methionine: N27, L29, G54, E75, D100, and N125.

This sequence belongs to the class I-like SAM-binding methyltransferase superfamily. rRNA adenine N(6)-methyltransferase family. RsmA subfamily.

The protein localises to the cytoplasm. It carries out the reaction adenosine(1518)/adenosine(1519) in 16S rRNA + 4 S-adenosyl-L-methionine = N(6)-dimethyladenosine(1518)/N(6)-dimethyladenosine(1519) in 16S rRNA + 4 S-adenosyl-L-homocysteine + 4 H(+). Functionally, specifically dimethylates two adjacent adenosines (A1518 and A1519) in the loop of a conserved hairpin near the 3'-end of 16S rRNA in the 30S particle. May play a critical role in biogenesis of 30S subunits. The protein is Ribosomal RNA small subunit methyltransferase A of Streptococcus mutans serotype c (strain ATCC 700610 / UA159).